The sequence spans 417 residues: MRFFLLMAVIYTTLAIAPVHFDREKVFRVKLQNEKHASVLKNLTQSIELDFWYPDAIHDIAVNMTVDFRVSEKESQTIQSTLEQHKIHYEILIHDLQEEIEKQFDVKDEIAGRHSYAKYNDWDKIVSWTEKMLEKHPEMVSRIKIGSTVEDNPLYVLKIGKKDGERKAIFMDCGIHAREWISPAFCQWFVYQATKSYGKNKIMTKLLDRMNFYVLPVFNVDGYIWSWTQDRMWRKNRSRNQNSTCIGTDLNRNFDVSWDSSPNTNKPCLNVYRGPAPESEKETKAVTNFIRSHLNSIKAYITFHSYSQMLLIPYGYTFKLPPNHQDLLKVARIATDALSTRYETRYIYGPIASTIYKTSGSSLDWVYDLGIKHTFAFELRDKGKSGFLLPESRIKPTCKETMLSVKFIAKYILKNTS.

Residues 1–15 form the signal peptide; that stretch reads MRFFLLMAVIYTTLA. Residues 16 to 109 constitute a propeptide, activation peptide; the sequence is IAPVHFDREK…IEKQFDVKDE (94 aa). Residues 118 to 412 enclose the Peptidase M14 domain; the sequence is KYNDWDKIVS…LSVKFIAKYI (295 aa). 2 disulfides stabilise this stretch: C173/C186 and C245/C268. H176 and E179 together coordinate Zn(2+). H304 serves as a coordination point for Zn(2+). E378 (proton donor/acceptor) is an active-site residue.

This sequence belongs to the peptidase M14 family. It depends on Zn(2+) as a cofactor.

The protein resides in the cytoplasmic vesicle. Its subcellular location is the secretory vesicle. It carries out the reaction Release of a C-terminal amino acid, but little or no action with -Asp, -Glu, -Arg, -Lys or -Pro.. In Mus musculus (Mouse), this protein is Mast cell carboxypeptidase A (Cpa3).